The following is a 298-amino-acid chain: Lipoyl synthase (298 aa).

Residues Cys-37, Cys-42, Cys-48, Cys-63, Cys-67, Cys-70, and Ser-277 each coordinate [4Fe-4S] cluster. Residues 49-266 enclose the Radical SAM core domain; the sequence is WGGGTATVML…KTLAESYGFL (218 aa).

It belongs to the radical SAM superfamily. Lipoyl synthase family. It depends on [4Fe-4S] cluster as a cofactor.

Its subcellular location is the cytoplasm. The enzyme catalyses [[Fe-S] cluster scaffold protein carrying a second [4Fe-4S](2+) cluster] + N(6)-octanoyl-L-lysyl-[protein] + 2 oxidized [2Fe-2S]-[ferredoxin] + 2 S-adenosyl-L-methionine + 4 H(+) = [[Fe-S] cluster scaffold protein] + N(6)-[(R)-dihydrolipoyl]-L-lysyl-[protein] + 4 Fe(3+) + 2 hydrogen sulfide + 2 5'-deoxyadenosine + 2 L-methionine + 2 reduced [2Fe-2S]-[ferredoxin]. Its pathway is protein modification; protein lipoylation via endogenous pathway; protein N(6)-(lipoyl)lysine from octanoyl-[acyl-carrier-protein]: step 2/2. Catalyzes the radical-mediated insertion of two sulfur atoms into the C-6 and C-8 positions of the octanoyl moiety bound to the lipoyl domains of lipoate-dependent enzymes, thereby converting the octanoylated domains into lipoylated derivatives. This Myxococcus xanthus (strain DK1622) protein is Lipoyl synthase.